A 658-amino-acid chain; its full sequence is Glycogen debranching enzyme (658 aa).

Asp336 serves as the catalytic Nucleophile. Residue Glu371 is the Proton donor of the active site. Residues 460–484 (ANGEENRDGSNNNHSNNHGKEGLGG) are disordered.

This sequence belongs to the glycosyl hydrolase 13 family.

It catalyses the reaction Hydrolysis of (1-&gt;6)-alpha-D-glucosidic linkages to branches with degrees of polymerization of three or four glucose residues in limit dextrin.. It functions in the pathway glycan degradation; glycogen degradation. Its function is as follows. Removes maltotriose and maltotetraose chains that are attached by 1,6-alpha-linkage to the limit dextrin main chain, generating a debranched limit dextrin. The chain is Glycogen debranching enzyme from Escherichia fergusonii (strain ATCC 35469 / DSM 13698 / CCUG 18766 / IAM 14443 / JCM 21226 / LMG 7866 / NBRC 102419 / NCTC 12128 / CDC 0568-73).